The following is a 134-amino-acid chain: Small ribosomal subunit protein uS11 (134 aa).

Belongs to the universal ribosomal protein uS11 family. In terms of assembly, part of the 30S ribosomal subunit. Interacts with proteins S7 and S18. Binds to IF-3.

In terms of biological role, located on the platform of the 30S subunit, it bridges several disparate RNA helices of the 16S rRNA. Forms part of the Shine-Dalgarno cleft in the 70S ribosome. This is Small ribosomal subunit protein uS11 from Salinibacter ruber (strain DSM 13855 / M31).